A 715-amino-acid chain; its full sequence is Transcription activator of gluconeogenesis MGYG_02011 (715 aa).

The span at Met1 to Met14 shows a compositional bias: polar residues. A disordered region spans residues Met1–Ile28. The segment at residues Cys66–Cys94 is a DNA-binding region (zn(2)-C6 fungal-type). Polar residues-rich tracts occupy residues Gln129–Lys166, Tyr179–Ile191, Ser203–Asn223, and Met362–Ala385. Disordered regions lie at residues Gln129–Asn223, Ser354–His414, Asn534–Thr569, and Gly628–Gly663. The span at Ser386–Gln400 shows a compositional bias: low complexity. Polar residues-rich tracts occupy residues His535–Ser554 and Gly639–Leu649. Positions Asn650–Arg662 are enriched in low complexity.

It belongs to the ERT1/acuK family.

Its subcellular location is the nucleus. Transcription factor which regulates nonfermentable carbon utilization. Activator of gluconeogenetic genes. This chain is Transcription activator of gluconeogenesis MGYG_02011, found in Arthroderma gypseum (strain ATCC MYA-4604 / CBS 118893) (Microsporum gypseum).